The chain runs to 542 residues: CTP synthase (542 aa).

Positions Met-1–Leu-266 are amidoligase domain. Ser-14 provides a ligand contact to CTP. A UTP-binding site is contributed by Ser-14. ATP contacts are provided by residues Ser-15–Ile-20 and Asp-72. Mg(2+) contacts are provided by Asp-72 and Glu-140. Residues Asp-147 to Glu-149, Lys-187 to Gln-192, and Lys-223 each bind CTP. UTP contacts are provided by residues Lys-187–Gln-192 and Lys-223. Lys-239–Val-241 is a binding site for ATP. Positions Thr-291 to Lys-542 constitute a Glutamine amidotransferase type-1 domain. Gly-352 serves as a coordination point for L-glutamine. Cys-379 serves as the catalytic Nucleophile; for glutamine hydrolysis. L-glutamine is bound by residues Leu-380 to Gln-383, Glu-403, and Arg-470. Catalysis depends on residues His-515 and Glu-517.

Belongs to the CTP synthase family. As to quaternary structure, homotetramer.

It catalyses the reaction UTP + L-glutamine + ATP + H2O = CTP + L-glutamate + ADP + phosphate + 2 H(+). The enzyme catalyses L-glutamine + H2O = L-glutamate + NH4(+). It carries out the reaction UTP + NH4(+) + ATP = CTP + ADP + phosphate + 2 H(+). It participates in pyrimidine metabolism; CTP biosynthesis via de novo pathway; CTP from UDP: step 2/2. With respect to regulation, allosterically activated by GTP, when glutamine is the substrate; GTP has no effect on the reaction when ammonia is the substrate. The allosteric effector GTP functions by stabilizing the protein conformation that binds the tetrahedral intermediate(s) formed during glutamine hydrolysis. Inhibited by the product CTP, via allosteric rather than competitive inhibition. Catalyzes the ATP-dependent amination of UTP to CTP with either L-glutamine or ammonia as the source of nitrogen. Regulates intracellular CTP levels through interactions with the four ribonucleotide triphosphates. The polypeptide is CTP synthase (Mannheimia succiniciproducens (strain KCTC 0769BP / MBEL55E)).